A 580-amino-acid polypeptide reads, in one-letter code: 9,13-epoxylabda-14-ene synthase, chloroplastic (580 aa).

The transit peptide at 1–32 (MSITFNLKIAPFSGPGIQRSKETFPATEIQIT) directs the protein to the chloroplast. 5 residues coordinate Mg(2+): Asp322, Asp326, Asn466, Thr470, and Glu474. The DDXXD motif signature appears at 322–326 (DDFFD).

It belongs to the terpene synthase family. It depends on Mg(2+) as a cofactor. As to expression, present in both leaves and flowers, with higher levels in leaves.

It is found in the plastid. The protein resides in the chloroplast. The enzyme catalyses peregrinol diphosphate = (13R)-9,13-epoxylabd-14-ene + diphosphate. It catalyses the reaction (+)-copalyl diphosphate = miltiradiene + diphosphate. The catalysed reaction is 8-hydroxycopalyl diphosphate = (13R)-manoyl oxide + diphosphate. The protein operates within secondary metabolite biosynthesis; terpenoid biosynthesis. In terms of biological role, involved in the biosynthesis of labdane-type diterpenoid including marrubiin and other labdane-related furanoid diterpenoids with potential applications as anti-diabetics, analgesics or vasorelaxants. Terpene synthase the catalyzes the conversion of peregrinol diphosphate to 9,13(R)-epoxy-labd-14-ene, from (+)-copalyl diphosphate ((+)-CPP) to miltiradiene and from 8-hydroxycopalyl diphosphate (LPP, labda-13-en-8-ol diphosphate) to manoyl oxide. This Marrubium vulgare (White horehound) protein is 9,13-epoxylabda-14-ene synthase, chloroplastic.